Reading from the N-terminus, the 299-residue chain is AT-hook motif nuclear-localized protein 25 (299 aa).

2 disordered regions span residues 1–87 (MSSY…RDSP) and 216–251 (EEET…CESN). Basic and acidic residues-rich tracts occupy residues 14 to 23 (HLQRPEDSRT) and 33 to 42 (NRSEADEAKA). Composition is skewed to low complexity over residues 44-72 (TTPT…PAGS) and 224-239 (TTGV…QSSE). A DNA-binding region (a.T hook) is located at residues 63–75 (RRPRGRPAGSKNK). The PPC domain maps to 87–233 (PNVLRSHVLE…TTGVQQQQPE (147 aa)). Positions 240–251 (VTGSGAQACESN) are enriched in polar residues.

Homodimer. Interacts with AHL27 and AHL29. In terms of tissue distribution, expressed in seedlings, leaves, stems, floral tips and flowers.

It is found in the nucleus. Transcription factor that specifically binds AT-rich DNA sequences related to the nuclear matrix attachment regions (MARs). Binds the DNA sequence GNFEI (GA-negative feedback element I) in the GA3OX1 promoter. Binding to GNFEI sequence is required for GA-negative feedback regulation of GA3OX1. In Arabidopsis thaliana (Mouse-ear cress), this protein is AT-hook motif nuclear-localized protein 25.